We begin with the raw amino-acid sequence, 326 residues long: Dipeptide transport ATP-binding protein DppD (326 aa).

Positions 5-255 (IRVEDLRAVY…PLHPYTRGLI (251 aa)) constitute an ABC transporter domain. ATP is bound by residues 44-49 (ASGKST), asparagine 61, and glutamine 97. 4 residues coordinate [4Fe-4S] cluster: cysteine 285, cysteine 291, cysteine 298, and cysteine 316.

It belongs to the ABC transporter superfamily.

The protein localises to the cell membrane. The enzyme catalyses a dipeptide(out) + ATP + H2O = a dipeptide(in) + ADP + phosphate + H(+). With respect to regulation, the C-terminal iron-sulfur cluster may stabilize the structure of the C-terminal loops and may function in the regulation of the transport process. Its function is as follows. Part of the ABC transporter Dpp involved in dipeptide transport. Responsible for energy coupling to the transport system. This chain is Dipeptide transport ATP-binding protein DppD, found in Caldanaerobacter subterraneus subsp. tengcongensis (strain DSM 15242 / JCM 11007 / NBRC 100824 / MB4) (Thermoanaerobacter tengcongensis).